We begin with the raw amino-acid sequence, 119 residues long: Large ribosomal subunit protein uL18 (119 aa).

This sequence belongs to the universal ribosomal protein uL18 family. As to quaternary structure, part of the 50S ribosomal subunit; part of the 5S rRNA/L5/L18/L25 subcomplex. Contacts the 5S and 23S rRNAs.

In terms of biological role, this is one of the proteins that bind and probably mediate the attachment of the 5S RNA into the large ribosomal subunit, where it forms part of the central protuberance. The protein is Large ribosomal subunit protein uL18 of Xanthomonas axonopodis pv. citri (strain 306).